The chain runs to 952 residues: Probable outer membrane protein pmp16 (952 aa).

The signal sequence occupies residues 1-27 (MSKTPPKFLFYLGNFTACMFGMTPAVY). An Autotransporter domain is found at 646 to 952 (GDLATTPLWQ…HLQAGSTLKF (307 aa)).

Belongs to the PMP outer membrane protein family.

The protein resides in the secreted. It is found in the cell wall. The protein localises to the cell outer membrane. In Chlamydia pneumoniae (Chlamydophila pneumoniae), this protein is Probable outer membrane protein pmp16 (pmp16).